A 159-amino-acid chain; its full sequence is Transcriptional repressor NrdR (159 aa).

The segment at 3–34 (CPFCRHEDTQVVDSRVSEDGAAIRRRRRCSAC) is a zinc-finger region. The 91-residue stretch at 49–139 (PAVVKKDGSR…VYRRFEDVSE (91 aa)) folds into the ATP-cone domain.

This sequence belongs to the NrdR family. Zn(2+) is required as a cofactor.

Its function is as follows. Negatively regulates transcription of bacterial ribonucleotide reductase nrd genes and operons by binding to NrdR-boxes. In Burkholderia multivorans (strain ATCC 17616 / 249), this protein is Transcriptional repressor NrdR.